The primary structure comprises 133 residues: Large ribosomal subunit protein bL12 (133 aa).

The tract at residues 98–118 is disordered; it reads DMVESTPKPIKEGTGKEDAED.

This sequence belongs to the bacterial ribosomal protein bL12 family. Homodimer. Part of the ribosomal stalk of the 50S ribosomal subunit. Forms a multimeric L10(L12)X complex, where L10 forms an elongated spine to which 2 to 4 L12 dimers bind in a sequential fashion. Binds GTP-bound translation factors.

Functionally, forms part of the ribosomal stalk which helps the ribosome interact with GTP-bound translation factors. Is thus essential for accurate translation. This chain is Large ribosomal subunit protein bL12, found in Crocosphaera subtropica (strain ATCC 51142 / BH68) (Cyanothece sp. (strain ATCC 51142)).